Consider the following 435-residue polypeptide: Amidase 1 (435 aa).

Catalysis depends on charge relay system residues Lys38 and Ser115. Ser139 (acyl-ester intermediate) is an active-site residue.

Belongs to the amidase family.

Its subcellular location is the cytoplasm. It localises to the nucleus. It is found in the nucleoplasm. The catalysed reaction is a monocarboxylic acid amide + H2O = a monocarboxylate + NH4(+). Amidase involved in auxin biosynthesis. Converts indole-3-acetamide (IAM) to indole-3-acetate, and phenyl-2-acetamide (PAM) to phenyl-2-acetate. Substrate preference is PAM &gt; IAM. The sequence is that of Amidase 1 from Oryza sativa subsp. japonica (Rice).